An 895-amino-acid polypeptide reads, in one-letter code: Probable LRR receptor-like serine/threonine-protein kinase At5g48740 (895 aa).

Positions 1–16 (MLFWVLLSSFCVFCFS) are cleaved as a signal peptide. At 17–544 (SPDGFLSLSC…INKKQRKQNR (528 aa)) the chain is on the extracellular side. Asn36, Asn50, Asn60, Asn140, Asn195, Asn234, and Asn318 each carry an N-linked (GlcNAc...) asparagine glycan. 6 LRR repeats span residues 385–407 (RVTSLFLSKINLRSISPTFGDLL), 408–430 (DLKTLDLHNTSLTGAIQNVGSLK), 431–453 (DLQKLNLSFNQLESFGSELEDLV), 454–477 (NLEVLDLQNNSLQGSVPETLGKLK), 478–500 (KLRLLNLENNNLVGPLPQSLNIT), and 511–532 (CLSFSSISCNNVSSTIDTPQVT). N-linked (GlcNAc...) asparagine glycans are attached at residues Asn416, Asn436, Asn462, Asn498, and Asn521. The chain crosses the membrane as a helical span at residues 545-565 (IAILLGVSGGALFATFLVFVF). Residues 566–895 (MSIFTRRQRN…SYLAASAHTD (330 aa)) lie on the Cytoplasmic side of the membrane. Residues 606–888 (RNFKEVIGRG…EAYSLQLSYL (283 aa)) enclose the Protein kinase domain. Residues 612–620 (IGRGSFGAV) and Lys634 contribute to the ATP site. Tyr679 carries the post-translational modification Phosphotyrosine. The active-site Proton acceptor is the Asp732. Position 736 is a phosphoserine (Ser736). 2 positions are modified to phosphothreonine: Thr767 and Thr772. Tyr780 is modified (phosphotyrosine).

Belongs to the protein kinase superfamily. Ser/Thr protein kinase family.

The protein resides in the membrane. It carries out the reaction L-seryl-[protein] + ATP = O-phospho-L-seryl-[protein] + ADP + H(+). The enzyme catalyses L-threonyl-[protein] + ATP = O-phospho-L-threonyl-[protein] + ADP + H(+). The polypeptide is Probable LRR receptor-like serine/threonine-protein kinase At5g48740 (Arabidopsis thaliana (Mouse-ear cress)).